We begin with the raw amino-acid sequence, 340 residues long: Lipopolysaccharide heptosyltransferase 3 (340 aa).

This sequence belongs to the glycosyltransferase 9 family.

It catalyses the reaction an L-alpha-D-Hep-(1-&gt;3)-4-O-phospho-L-alpha-D-Hep-(1-&gt;5)-[alpha-Kdo-(2-&gt;4)]-alpha-Kdo-(2-&gt;6)-lipid A + ADP-L-glycero-beta-D-manno-heptose = an L-alpha-D-Hep-(1-&gt;7)-L-alpha-D-Hep-(1-&gt;3)-4-O-phospho-L-alpha-D-Hep-(1-&gt;5)-[alpha-Kdo-(2-&gt;4)]-alpha-Kdo-(2-&gt;6)-lipid A + ADP + H(+). The enzyme catalyses L-alpha-D-Hep-(1-&gt;3)-4-O-phospho-L-alpha-D-Hep-(1-&gt;5)-[alpha-Kdo-(2-&gt;4)]-alpha-Kdo-(2-&gt;6)-lipid A (E. coli) + ADP-L-glycero-beta-D-manno-heptose = L-alpha-D-Hep-(1-&gt;7)-L-alpha-D-Hep-(1-&gt;3)-4-O-phospho-L-alpha-D-Hep-(1-&gt;5)-[alpha-Kdo-(2-&gt;4)]-alpha-Kdo-(2-&gt;6)-lipid A (E. coli) + ADP + H(+). The protein operates within bacterial outer membrane biogenesis; LPS core biosynthesis. Its function is as follows. Glycosyltransferase involved in the biosynthesis of the core oligosaccharide region of lipopolysaccharide (LPS). Catalyzes the addition of the third heptose unit (HepIII) to the second heptose unit (HepII) of the phospho-Hep2-Kdo2-lipid A module. The transfer of HepIII seems to be a prerequisite to the phosphorylation of the second heptose unit. The sequence is that of Lipopolysaccharide heptosyltransferase 3 from Escherichia coli.